The sequence spans 155 residues: Class I hydrophobin C (155 aa).

A signal peptide spans 1 to 22; sequence MLVTMRLSRSIAVFTLVTYATG. Cystine bridges form between cysteine 52–cysteine 129, cysteine 60–cysteine 123, cysteine 61–cysteine 101, and cysteine 130–cysteine 148.

The protein belongs to the fungal hydrophobin family. As to quaternary structure, self-assembles to form functional amyloid fibrils called rodlets. Self-assembly into fibrillar rodlets occurs spontaneously at hydrophobic:hydrophilic interfaces and the rodlets further associate laterally to form amphipathic monolayers.

The protein localises to the secreted. It localises to the spore wall. In terms of biological role, aerial growth, conidiation, and dispersal of filamentous fungi in the environment rely upon a capability of their secreting small amphipathic proteins called hydrophobins (HPBs) with low sequence identity. Class I can self-assemble into an outermost layer of rodlet bundles on aerial cell surfaces, conferring cellular hydrophobicity that supports fungal growth, development and dispersal; whereas Class II form highly ordered films at water-air interfaces through intermolecular interactions but contribute nothing to the rodlet structure. RodC is a class I hydrophobin that, unlike rodA, is not required for rodlet formation. In Aspergillus fumigatus (strain ATCC MYA-4609 / CBS 101355 / FGSC A1100 / Af293) (Neosartorya fumigata), this protein is Class I hydrophobin C.